The primary structure comprises 176 residues: Large ribosomal subunit protein uL6 (176 aa).

This sequence belongs to the universal ribosomal protein uL6 family. Part of the 50S ribosomal subunit.

In terms of biological role, this protein binds to the 23S rRNA, and is important in its secondary structure. It is located near the subunit interface in the base of the L7/L12 stalk, and near the tRNA binding site of the peptidyltransferase center. This Burkholderia thailandensis (strain ATCC 700388 / DSM 13276 / CCUG 48851 / CIP 106301 / E264) protein is Large ribosomal subunit protein uL6.